Reading from the N-terminus, the 245-residue chain is UDP-N-acetyl-D-mannosaminuronic acid transferase (245 aa).

Belongs to the glycosyltransferase 26 family.

The enzyme catalyses UDP-N-acetyl-alpha-D-mannosaminouronate + N-acetyl-alpha-D-glucosaminyl-di-trans,octa-cis-undecaprenyl diphosphate = beta-D-ManNAcA-(1-&gt;4)-alpha-D-GlcNAc-di-trans,octa-cis-undecaprenyl diphosphate + UDP + H(+). It functions in the pathway bacterial outer membrane biogenesis; enterobacterial common antigen biosynthesis. Functionally, catalyzes the synthesis of Und-PP-GlcNAc-ManNAcA (Lipid II), the second lipid-linked intermediate involved in enterobacterial common antigen (ECA) synthesis. The chain is UDP-N-acetyl-D-mannosaminuronic acid transferase from Proteus mirabilis (strain HI4320).